The sequence spans 126 residues: Glycine cleavage system H protein (126 aa).

A Lipoyl-binding domain is found at 22–104 (IAYVGITDYA…YGEGWLIKMK (83 aa)). Lysine 63 carries the N6-lipoyllysine modification.

Belongs to the GcvH family. The glycine cleavage system is composed of four proteins: P, T, L and H. The cofactor is (R)-lipoate.

The glycine cleavage system catalyzes the degradation of glycine. The H protein shuttles the methylamine group of glycine from the P protein to the T protein. The chain is Glycine cleavage system H protein from Bacteroides thetaiotaomicron (strain ATCC 29148 / DSM 2079 / JCM 5827 / CCUG 10774 / NCTC 10582 / VPI-5482 / E50).